The sequence spans 230 residues: Large ribosomal subunit protein uL1 (230 aa).

Belongs to the universal ribosomal protein uL1 family. As to quaternary structure, part of the 50S ribosomal subunit.

In terms of biological role, binds directly to 23S rRNA. The L1 stalk is quite mobile in the ribosome, and is involved in E site tRNA release. Its function is as follows. Protein L1 is also a translational repressor protein, it controls the translation of the L11 operon by binding to its mRNA. The polypeptide is Large ribosomal subunit protein uL1 (Desulforapulum autotrophicum (strain ATCC 43914 / DSM 3382 / VKM B-1955 / HRM2) (Desulfobacterium autotrophicum)).